The chain runs to 240 residues: LexA repressor (240 aa).

Residues 26–46 (FDEMKEALDLASKSGIHRLIT) constitute a DNA-binding region (H-T-H motif). Residues Ser161 and Lys199 each act as for autocatalytic cleavage activity in the active site.

This sequence belongs to the peptidase S24 family. Homodimer.

The catalysed reaction is Hydrolysis of Ala-|-Gly bond in repressor LexA.. In terms of biological role, represses a number of genes involved in the response to DNA damage (SOS response), including recA and lexA. In the presence of single-stranded DNA, RecA interacts with LexA causing an autocatalytic cleavage which disrupts the DNA-binding part of LexA, leading to derepression of the SOS regulon and eventually DNA repair. This chain is LexA repressor, found in Brucella melitensis biotype 1 (strain ATCC 23456 / CCUG 17765 / NCTC 10094 / 16M).